Consider the following 595-residue polypeptide: Zinc finger protein 467 (595 aa).

The disordered stretch occupies residues 1–67; that stretch reads MRETLEALSS…EEGAHTEQAE (67 aa). Lys-97 is covalently cross-linked (Glycyl lysine isopeptide (Lys-Gly) (interchain with G-Cter in SUMO2)). C2H2-type zinc fingers lie at residues 160 to 182, 188 to 210, 216 to 238, 244 to 266, 272 to 294, and 300 to 322; these read YGCG…QRLH, CACP…QRSH, FPCS…LRTH, YPCA…QKTH, FPCT…QRIH, and YQCA…QRVH. A disordered region spans residues 313 to 350; it reads QHLVRHQRVHQTAGPARPSPDSSASPHSTAPSPTPSFP. The span at 325-343 shows a compositional bias: low complexity; the sequence is AGPARPSPDSSASPHSTAP. 6 C2H2-type zinc fingers span residues 355–377, 431–453, 459–481, 487–509, 515–537, and 543–565; these read FACS…QCLH, FFCP…PRVH, FACT…SRAH, FACA…QAVH, HACA…QAIH, and FSCP…QLIH. Lys-368 is covalently cross-linked (Glycyl lysine isopeptide (Lys-Gly) (interchain with G-Cter in SUMO2)).

Belongs to the krueppel C2H2-type zinc-finger protein family. As to quaternary structure, interacts with STAT3. Enhances STAT3 activity by keeping it in the nucleus.

It localises to the nucleus. In terms of biological role, transcription factor that promotes adipocyte differentiation and suppresses osteoblast differentiation in the bone marrow. Enhances the osteoclast-supporting ability of stromal cells. Binds with STAT3 the consensus sequence 5'-CTTCTGGGAAGA-3' of the acute phase response element (APRE). Transactivates several promoters including FOS, OSM and PPARG. Recruits a histone deacetylase complex. The protein is Zinc finger protein 467 (ZNF467) of Homo sapiens (Human).